A 610-amino-acid polypeptide reads, in one-letter code: UvrABC system protein C (610 aa).

In terms of domain architecture, GIY-YIG spans 16–94; sequence HQPGVYRMYN…IKQYLPKYNV (79 aa). A UVR domain is found at 204 to 239; that stretch reads QQVLKQLIEKMEVASQQLRFEDAAKFRDQIQAIRRV.

This sequence belongs to the UvrC family. Interacts with UvrB in an incision complex.

It is found in the cytoplasm. Functionally, the UvrABC repair system catalyzes the recognition and processing of DNA lesions. UvrC both incises the 5' and 3' sides of the lesion. The N-terminal half is responsible for the 3' incision and the C-terminal half is responsible for the 5' incision. This chain is UvrABC system protein C, found in Vibrio parahaemolyticus serotype O3:K6 (strain RIMD 2210633).